Here is a 267-residue protein sequence, read N- to C-terminus: Thiamine pyrophosphokinase 1 (267 aa).

It belongs to the thiamine pyrophosphokinase family. Expressed in roots, leaves and flowers.

It localises to the cytoplasm. The protein resides in the cytosol. The enzyme catalyses thiamine + ATP = thiamine diphosphate + AMP + H(+). It functions in the pathway cofactor biosynthesis; thiamine diphosphate biosynthesis; thiamine diphosphate from thiamine: step 1/1. In terms of biological role, catalyzes the phosphorylation of thiamine to thiamine pyrophosphate (TPP). TPP is an active cofactor for enzymes involved in glycolysis and energy production. Plant leaves require high levels of TPP for photosynthesis and carbohydrate metabolism. This Arabidopsis thaliana (Mouse-ear cress) protein is Thiamine pyrophosphokinase 1.